Consider the following 72-residue polypeptide: Small ribosomal subunit protein bS18c (72 aa).

This sequence belongs to the bacterial ribosomal protein bS18 family. Part of the 30S ribosomal subunit.

Its subcellular location is the plastid. It is found in the chloroplast. In Emiliania huxleyi (Coccolithophore), this protein is Small ribosomal subunit protein bS18c.